We begin with the raw amino-acid sequence, 399 residues long: Imidazolonepropionase (399 aa).

Positions 1-13 are enriched in polar residues; that stretch reads MSETLYTGISQLA. Residues 1-20 form a disordered region; it reads MSETLYTGISQLATPRPGPQ. Positions 74 and 76 each coordinate Fe(3+). Zn(2+) contacts are provided by H74 and H76. Residues R83, Y146, and H176 each coordinate 4-imidazolone-5-propanoate. Y146 provides a ligand contact to N-formimidoyl-L-glutamate. H238 serves as a coordination point for Fe(3+). H238 provides a ligand contact to Zn(2+). Q241 provides a ligand contact to 4-imidazolone-5-propanoate. D312 contacts Fe(3+). A Zn(2+)-binding site is contributed by D312. N-formimidoyl-L-glutamate contacts are provided by N314 and G316. Residue S317 participates in 4-imidazolone-5-propanoate binding.

This sequence belongs to the metallo-dependent hydrolases superfamily. HutI family. The cofactor is Zn(2+). It depends on Fe(3+) as a cofactor.

It localises to the cytoplasm. It carries out the reaction 4-imidazolone-5-propanoate + H2O = N-formimidoyl-L-glutamate. Its pathway is amino-acid degradation; L-histidine degradation into L-glutamate; N-formimidoyl-L-glutamate from L-histidine: step 3/3. Catalyzes the hydrolytic cleavage of the carbon-nitrogen bond in imidazolone-5-propanoate to yield N-formimidoyl-L-glutamate. It is the third step in the universal histidine degradation pathway. The chain is Imidazolonepropionase from Deinococcus radiodurans (strain ATCC 13939 / DSM 20539 / JCM 16871 / CCUG 27074 / LMG 4051 / NBRC 15346 / NCIMB 9279 / VKM B-1422 / R1).